Consider the following 201-residue polypeptide: Large ribosomal subunit protein uL4 (201 aa).

The tract at residues 45-66 (AQLTRSEVSGGGKKPWRQKGTG) is disordered.

This sequence belongs to the universal ribosomal protein uL4 family. In terms of assembly, part of the 50S ribosomal subunit.

In terms of biological role, one of the primary rRNA binding proteins, this protein initially binds near the 5'-end of the 23S rRNA. It is important during the early stages of 50S assembly. It makes multiple contacts with different domains of the 23S rRNA in the assembled 50S subunit and ribosome. Forms part of the polypeptide exit tunnel. The protein is Large ribosomal subunit protein uL4 of Aeromonas hydrophila subsp. hydrophila (strain ATCC 7966 / DSM 30187 / BCRC 13018 / CCUG 14551 / JCM 1027 / KCTC 2358 / NCIMB 9240 / NCTC 8049).